A 447-amino-acid chain; its full sequence is Probable glycine dehydrogenase (decarboxylating) subunit 1 (447 aa).

This sequence belongs to the GcvP family. N-terminal subunit subfamily. As to quaternary structure, the glycine cleavage system is composed of four proteins: P, T, L and H. In this organism, the P 'protein' is a heterodimer of two subunits.

The catalysed reaction is N(6)-[(R)-lipoyl]-L-lysyl-[glycine-cleavage complex H protein] + glycine + H(+) = N(6)-[(R)-S(8)-aminomethyldihydrolipoyl]-L-lysyl-[glycine-cleavage complex H protein] + CO2. The glycine cleavage system catalyzes the degradation of glycine. The P protein binds the alpha-amino group of glycine through its pyridoxal phosphate cofactor; CO(2) is released and the remaining methylamine moiety is then transferred to the lipoamide cofactor of the H protein. The protein is Probable glycine dehydrogenase (decarboxylating) subunit 1 of Bacillus cytotoxicus (strain DSM 22905 / CIP 110041 / 391-98 / NVH 391-98).